The chain runs to 142 residues: U1 small nuclear ribonucleoprotein C (142 aa).

The Matrin-type zinc-finger motif lies at 4-36 (YYCDYCDTFLTHDSPSVRKTHNGGRKHKDNVRM).

Belongs to the U1 small nuclear ribonucleoprotein C family. U1 snRNP is composed of the 7 core Sm proteins B/B', D1, D2, D3, E, F and G that assemble in a heptameric protein ring on the Sm site of the small nuclear RNA to form the core snRNP, and at least 3 U1 snRNP-specific proteins U1-70K, U1-A and U1-C. U1-C interacts with U1 snRNA and the 5' splice-site region of the pre-mRNA.

It is found in the nucleus. Component of the spliceosomal U1 snRNP, which is essential for recognition of the pre-mRNA 5' splice-site and the subsequent assembly of the spliceosome. U1-C is directly involved in initial 5' splice-site recognition for both constitutive and regulated alternative splicing. The interaction with the 5' splice-site seems to precede base-pairing between the pre-mRNA and the U1 snRNA. Stimulates commitment or early (E) complex formation by stabilizing the base pairing of the 5' end of the U1 snRNA and the 5' splice-site region. The sequence is that of U1 small nuclear ribonucleoprotein C from Caenorhabditis elegans.